Reading from the N-terminus, the 176-residue chain is Peroxynitrite isomerase 1 (176 aa).

The segment at 1 to 23 is disordered; that stretch reads MDENSTLSPAHSDAAASSSANTP. Residues 8 to 20 are compositionally biased toward low complexity; it reads SPAHSDAAASSSA. The GXWXGXG motif lies at 37–43; sequence GLWRGEG. Histidine 168 is a heme b binding site.

Belongs to the nitrobindin family. As to quaternary structure, homodimer. It depends on heme b as a cofactor.

It carries out the reaction peroxynitrite = nitrate. Its pathway is nitrogen metabolism. Heme-binding protein able to scavenge peroxynitrite and to protect free L-tyrosine against peroxynitrite-mediated nitration, by acting as a peroxynitrite isomerase that converts peroxynitrite to nitrate. Therefore, this protein likely plays a role in peroxynitrite sensing and in the detoxification of reactive nitrogen and oxygen species (RNS and ROS, respectively). Is able to bind nitric oxide (NO) in vitro, but may act as a sensor of peroxynitrite levels in vivo. This is Peroxynitrite isomerase 1 from Rhodococcus jostii (strain RHA1).